A 367-amino-acid chain; its full sequence is Folliculin-like protein bhd1 (367 aa).

2 disordered regions span residues 41–75 and 92–115; these read RSIG…QSST and SKGP…SPIS. Over residues 54–64 the composition is skewed to basic and acidic residues; that stretch reads EAFKNELDNRN. 2 stretches are compositionally biased toward polar residues: residues 65 to 75 and 99 to 115; these read NADSQSLQSST and RVNS…SPIS. The uDENN FLCN/SMCR8-type domain maps to 131 to 302; that stretch reads FSVPDVQPRL…SNIGTAPSYE (172 aa).

The protein belongs to the folliculin family.

Its subcellular location is the nucleus. It is found in the cytoplasm. This chain is Folliculin-like protein bhd1 (bhd1), found in Schizosaccharomyces pombe (strain 972 / ATCC 24843) (Fission yeast).